Reading from the N-terminus, the 331-residue chain is Ribosomal RNA small subunit methyltransferase C (331 aa).

This sequence belongs to the methyltransferase superfamily. RsmC family. Monomer.

Its subcellular location is the cytoplasm. It carries out the reaction guanosine(1207) in 16S rRNA + S-adenosyl-L-methionine = N(2)-methylguanosine(1207) in 16S rRNA + S-adenosyl-L-homocysteine + H(+). Functionally, specifically methylates the guanine in position 1207 of 16S rRNA in the 30S particle. The protein is Ribosomal RNA small subunit methyltransferase C of Pseudomonas putida (strain W619).